The primary structure comprises 466 residues: Ribulose bisphosphate carboxylase large chain (466 aa).

The residue at position 5 (K5) is an N6,N6,N6-trimethyllysine. Substrate contacts are provided by N114 and T164. The active-site Proton acceptor is K166. Position 168 (K168) interacts with substrate. Mg(2+) contacts are provided by K192, D194, and E195. N6-carboxylysine is present on K192. H285 (proton acceptor) is an active-site residue. Substrate is bound by residues R286, H318, and S370.

Belongs to the RuBisCO large chain family. Type I subfamily. As to quaternary structure, heterohexadecamer of 8 large chains and 8 small chains; disulfide-linked. The disulfide link is formed within the large subunit homodimers. Mg(2+) is required as a cofactor. The disulfide bond which can form in the large chain dimeric partners within the hexadecamer appears to be associated with oxidative stress and protein turnover.

Its subcellular location is the plastid. It is found in the chloroplast. It catalyses the reaction 2 (2R)-3-phosphoglycerate + 2 H(+) = D-ribulose 1,5-bisphosphate + CO2 + H2O. The catalysed reaction is D-ribulose 1,5-bisphosphate + O2 = 2-phosphoglycolate + (2R)-3-phosphoglycerate + 2 H(+). RuBisCO catalyzes two reactions: the carboxylation of D-ribulose 1,5-bisphosphate, the primary event in carbon dioxide fixation, as well as the oxidative fragmentation of the pentose substrate in the photorespiration process. Both reactions occur simultaneously and in competition at the same active site. This Tropaeolum majus (Common nasturtium) protein is Ribulose bisphosphate carboxylase large chain.